A 110-amino-acid polypeptide reads, in one-letter code: Nucleotide-binding protein HI1146 homolog (110 aa).

The protein belongs to the RapZ-like family.

Displays ATPase and GTPase activities. The sequence is that of Nucleotide-binding protein HI1146 homolog from Aggregatibacter actinomycetemcomitans (Actinobacillus actinomycetemcomitans).